The primary structure comprises 79 residues: Conotoxin 1 (79 aa).

The first 22 residues, methionine 1 to alanine 22, serve as a signal peptide directing secretion. Residues aspartate 23–alanine 46 constitute a propeptide that is removed on maturation. Intrachain disulfides connect cysteine 49/cysteine 62, cysteine 56/cysteine 67, and cysteine 61/cysteine 77.

It belongs to the conotoxin O1 superfamily. As to expression, expressed by the venom duct.

It is found in the secreted. This chain is Conotoxin 1, found in Conus vexillum (Flag cone).